Reading from the N-terminus, the 149-residue chain is D-aminoacyl-tRNA deacylase (149 aa).

A Gly-cisPro motif, important for rejection of L-amino acids motif is present at residues 137–138 (GP).

It belongs to the DTD family. As to quaternary structure, homodimer.

It localises to the cytoplasm. It catalyses the reaction glycyl-tRNA(Ala) + H2O = tRNA(Ala) + glycine + H(+). It carries out the reaction a D-aminoacyl-tRNA + H2O = a tRNA + a D-alpha-amino acid + H(+). Functionally, an aminoacyl-tRNA editing enzyme that deacylates mischarged D-aminoacyl-tRNAs. Also deacylates mischarged glycyl-tRNA(Ala), protecting cells against glycine mischarging by AlaRS. Acts via tRNA-based rather than protein-based catalysis; rejects L-amino acids rather than detecting D-amino acids in the active site. By recycling D-aminoacyl-tRNA to D-amino acids and free tRNA molecules, this enzyme counteracts the toxicity associated with the formation of D-aminoacyl-tRNA entities in vivo and helps enforce protein L-homochirality. The polypeptide is D-aminoacyl-tRNA deacylase (Caldicellulosiruptor saccharolyticus (strain ATCC 43494 / DSM 8903 / Tp8T 6331)).